Reading from the N-terminus, the 88-residue chain is MGTARFLRAVLLLSVLLMVTFPALLSAEHHDGRVDICRLPSGSGDCLRFFEMWYFDGTTCTKFVYGGYGGNDNRFPTEKACMKRCAKA.

The N-terminal stretch at 1 to 27 (MGTARFLRAVLLLSVLLMVTFPALLSA) is a signal peptide. The propeptide occupies 28–33 (EHHDGR). In terms of domain architecture, BPTI/Kunitz inhibitor spans 37 to 85 (CRLPSGSGDCLRFFEMWYFDGTTCTKFVYGGYGGNDNRFPTEKACMKRC). 2 disulfides stabilise this stretch: Cys37–Cys85 and Cys60–Cys81.

This sequence belongs to the venom Kunitz-type family. 03 (sub-Kunitz) subfamily. In terms of tissue distribution, expressed by the venom gland.

The protein resides in the secreted. Its function is as follows. Serine protease inhibitor that inhibits trypsin at a molar ratio of 1:1. The sequence is that of Kunitz-type U15-theraphotoxin-Hhn1h from Cyriopagopus hainanus (Chinese bird spider).